Reading from the N-terminus, the 505-residue chain is ATP synthase subunit alpha (505 aa).

172–179 provides a ligand contact to ATP; it reads GDRQIGKT.

Belongs to the ATPase alpha/beta chains family. As to quaternary structure, F-type ATPases have 2 components, CF(1) - the catalytic core - and CF(0) - the membrane proton channel. CF(1) has five subunits: alpha(3), beta(3), gamma(1), delta(1), epsilon(1). CF(0) has three main subunits: a(1), b(2) and c(9-12). The alpha and beta chains form an alternating ring which encloses part of the gamma chain. CF(1) is attached to CF(0) by a central stalk formed by the gamma and epsilon chains, while a peripheral stalk is formed by the delta and b chains.

The protein localises to the cell inner membrane. It catalyses the reaction ATP + H2O + 4 H(+)(in) = ADP + phosphate + 5 H(+)(out). Functionally, produces ATP from ADP in the presence of a proton gradient across the membrane. The alpha chain is a regulatory subunit. This chain is ATP synthase subunit alpha, found in Syntrophobacter fumaroxidans (strain DSM 10017 / MPOB).